The chain runs to 309 residues: Small ribosomal subunit protein mS23 (309 aa).

This sequence belongs to the mitochondrion-specific ribosomal protein mS23 family. As to quaternary structure, component of the mitochondrial small ribosomal subunit.

Its subcellular location is the mitochondrion. This is Small ribosomal subunit protein mS23 (RSM25) from Lodderomyces elongisporus (strain ATCC 11503 / CBS 2605 / JCM 1781 / NBRC 1676 / NRRL YB-4239) (Yeast).